Reading from the N-terminus, the 119-residue chain is Large ribosomal subunit protein bL20 (119 aa).

The protein belongs to the bacterial ribosomal protein bL20 family.

Its function is as follows. Binds directly to 23S ribosomal RNA and is necessary for the in vitro assembly process of the 50S ribosomal subunit. It is not involved in the protein synthesizing functions of that subunit. The chain is Large ribosomal subunit protein bL20 from Nitrosomonas eutropha (strain DSM 101675 / C91 / Nm57).